Reading from the N-terminus, the 821-residue chain is Protein SCAR1 (821 aa).

3 disordered regions span residues 168 to 189 (KRASRASKPSEIKKKKSIQRGR), 205 to 289 (TCTS…RGSS), and 577 to 625 (TSLP…RESK). A compositionally biased stretch (polar residues) spans 206 to 225 (CTSLSFSGRTSTSKTASTIE). Over residues 226 to 250 (IESKSDLQEHRSFSFDSRSGGEKPK) the composition is skewed to basic and acidic residues. The segment covering 252–265 (VSSSSRFTPGSRTI) has biased composition (polar residues). The segment covering 592–612 (SSSYISDNSDNDNRSVSMSEQ) has biased composition (low complexity). A WH2 domain is found at 756-774 (EAGDFLHQIRTKQFNLRRV). Residues 802–821 (QAVASDDGEGESDTWSDSDT) form a disordered region. Acidic residues predominate over residues 807-821 (DDGEGESDTWSDSDT).

It belongs to the SCAR/WAVE family. Binds BRK1 and actin. Interacts with SPK1, ABI1 and ABI2. In terms of tissue distribution, expressed in expanding cotyledons, expanding leaves and expanding siliques containing developing embryos. Detected in unopened flower buds and in the expanding tip region of roots. Reduced expression in mature leaves and mature cotyledons.

It localises to the cytoplasm. The protein resides in the cytoskeleton. Involved in regulation of actin and microtubule organization. Part of a WAVE complex that activates the Arp2/3 complex. Regulates trichome branch positioning and expansion. The protein is Protein SCAR1 (SCAR1) of Arabidopsis thaliana (Mouse-ear cress).